We begin with the raw amino-acid sequence, 223 residues long: Homeobox protein egl-5 (223 aa).

The span at 1 to 25 (MNTSTSAFDFGSSTASSAATSTTSS) shows a compositional bias: low complexity. Disordered regions lie at residues 1–58 (MNTS…STEA) and 168–191 (KKEK…PPKG). The segment at residues 112–171 (SKKGRQTYQRYQTSVLEAKFQQSSYVSKKQREELRLQTQLTDRQIKIWFQNRRMKAKKEK) is a DNA-binding region (homeobox).

It belongs to the Abd-B homeobox family. Interacts with the TCF transcription factor pop-1.

Its subcellular location is the nucleus. In terms of biological role, involved in control of cell fate and pattern formation along the anterior-posterior axis, acting mainly in the tail. Required during embryonic and postembryonic development. Essential for the determination of specific neurons, including the PLM touch neurons. Plays a role in neural fate specification in the hermaphrodite-specific neuron (HSN)/PHB neuron lineage, acting in concert with T-box protein tbx-2 and the asymmetric cell division protein ham-1. Required for male gonadal fate determination, acting in parallel with a WNT/beta-catenin pathway, perhaps by recruiting pop-1 to male-specific gonadal target genes. Involved in development of the hermaphrodite hindgut, and for the response to rectal infection by the coryneform bacterium M.nematophilum. In Caenorhabditis elegans, this protein is Homeobox protein egl-5.